The primary structure comprises 258 residues: Snake venom serine protease (258 aa).

A signal peptide spans 1–18 (MVLIRVLANLLILQLSYA). The propeptide occupies 19 to 24 (QKSSEL). The Peptidase S1 domain occupies 25–249 (VIGGDECNIN…YTEWIQSILA (225 aa)). 6 cysteine pairs are disulfide-bonded: cysteine 31–cysteine 163, cysteine 50–cysteine 66, cysteine 98–cysteine 256, cysteine 142–cysteine 210, cysteine 174–cysteine 189, and cysteine 200–cysteine 225. Active-site charge relay system residues include histidine 65 and aspartate 110. N-linked (GlcNAc...) asparagine glycosylation occurs at asparagine 154. Serine 204 acts as the Charge relay system in catalysis.

The protein belongs to the peptidase S1 family. Snake venom subfamily. As to quaternary structure, monomer. As to expression, expressed by the venom gland.

Its subcellular location is the secreted. In terms of biological role, snake venom serine protease that may act in the hemostasis system of the prey. This Lachesis stenophrys (Central American bushmaster) protein is Snake venom serine protease.